A 301-amino-acid polypeptide reads, in one-letter code: GTPase Era (301 aa).

The Era-type G domain occupies 7–175 (YCGFIAIVGR…AGIVRKHLPE (169 aa)). Residues 15 to 22 (GRPNVGKS) form a G1 region. Residue 15 to 22 (GRPNVGKS) participates in GTP binding. Positions 41 to 45 (QTTRH) are G2. The G3 stretch occupies residues 62-65 (DTPG). GTP is bound by residues 62–66 (DTPGL) and 124–127 (NKVD). The G4 stretch occupies residues 124–127 (NKVD). The segment at 154-156 (ISA) is G5. A KH type-2 domain is found at 206–283 (LGAELPYSVT…HLELWVKVKS (78 aa)).

Belongs to the TRAFAC class TrmE-Era-EngA-EngB-Septin-like GTPase superfamily. Era GTPase family. Monomer.

It localises to the cytoplasm. The protein localises to the cell inner membrane. An essential GTPase that binds both GDP and GTP, with rapid nucleotide exchange. Plays a role in 16S rRNA processing and 30S ribosomal subunit biogenesis and possibly also in cell cycle regulation and energy metabolism. In Salmonella agona (strain SL483), this protein is GTPase Era.